The following is a 272-amino-acid chain: Probable prolyl 4-hydroxylase 11 (272 aa).

At 1–55 the chain is on the cytoplasmic side; sequence MSKSTSVSTILYLRQRLQGLKIYETSDLIQHINTFDELVGEQVSVDVKIEEKTKD. A helical; Signal-anchor for type II membrane protein membrane pass occupies residues 56–80; the sequence is MILLCSLSPLLTTLTCSMVKVAASL. Over 81-272 the chain is Lumenal; sequence RFPNERWLEV…KRHCLSLNLF (192 aa). In terms of domain architecture, Fe2OG dioxygenase spans 179–272; it reads NGETLQVINY…KRHCLSLNLF (94 aa). 3 residues coordinate Fe cation: His197, Asp199, and His261.

Belongs to the P4HA family. It depends on Fe(2+) as a cofactor. L-ascorbate is required as a cofactor.

It is found in the endoplasmic reticulum membrane. It catalyses the reaction L-prolyl-[collagen] + 2-oxoglutarate + O2 = trans-4-hydroxy-L-prolyl-[collagen] + succinate + CO2. Its function is as follows. Catalyzes the post-translational formation of 4-hydroxyproline in -Xaa-Pro-Gly- sequences in proline-rich peptide sequences of plant glycoproteins and other proteins. Hydroxyprolines are important constituent of many plant cell wall glycoproteins such as extensins, hydroxyproline-rich glycoproteins, lectins and arabinogalactan proteins. The polypeptide is Probable prolyl 4-hydroxylase 11 (Arabidopsis thaliana (Mouse-ear cress)).